Here is a 498-residue protein sequence, read N- to C-terminus: Probable global transactivator (498 aa).

A Helicase ATP-binding domain is found at 43 to 206 (RERRGRPHGG…YAIIHFLRCR (164 aa)). 55–63 (ADDMGLGKT) is a binding site for ATP. A DEAH box motif is present at residues 157-160 (DEAH). The region spanning 337-493 (ELVQRVLDTP…RTALNYEDIK (157 aa)) is the Helicase C-terminal domain.

This sequence belongs to the SNF2/RAD54 helicase family.

The polypeptide is Probable global transactivator (GTA) (Orgyia pseudotsugata (Douglas-fir tussock moth)).